Here is a 136-residue protein sequence, read N- to C-terminus: Small ribosomal subunit protein uS8c (136 aa).

This sequence belongs to the universal ribosomal protein uS8 family. As to quaternary structure, part of the 30S ribosomal subunit.

Its subcellular location is the plastid. The protein resides in the chloroplast. One of the primary rRNA binding proteins, it binds directly to 16S rRNA central domain where it helps coordinate assembly of the platform of the 30S subunit. The sequence is that of Small ribosomal subunit protein uS8c (rps8) from Citrus sinensis (Sweet orange).